Consider the following 86-residue polypeptide: MASSLSFGSRFLIALIRGYQLVISPLLGPRCRFNPTCSQYGIEALRRFGVIKGCWLTVKRVLKCHPLHEGGDDPVPPVKNNDNREH.

The segment at 67-86 (LHEGGDDPVPPVKNNDNREH) is disordered.

It belongs to the UPF0161 family.

The protein localises to the cell inner membrane. Could be involved in insertion of integral membrane proteins into the membrane. The polypeptide is Putative membrane protein insertion efficiency factor (Photorhabdus laumondii subsp. laumondii (strain DSM 15139 / CIP 105565 / TT01) (Photorhabdus luminescens subsp. laumondii)).